Here is a 119-residue protein sequence, read N- to C-terminus: Large ribosomal subunit protein bL19c (119 aa).

It belongs to the bacterial ribosomal protein bL19 family.

It localises to the plastid. The protein localises to the chloroplast. The polypeptide is Large ribosomal subunit protein bL19c (Mesostigma viride (Green alga)).